Reading from the N-terminus, the 137-residue chain is Peptide methionine sulfoxide reductase MsrB (137 aa).

The region spanning 7–129 (AEELKKKLSE…NSASLAFSDE (123 aa)) is the MsrB domain. Zn(2+)-binding residues include C46, C49, C95, and C98. The active-site Nucleophile is C118.

It belongs to the MsrB Met sulfoxide reductase family. The cofactor is Zn(2+).

It carries out the reaction L-methionyl-[protein] + [thioredoxin]-disulfide + H2O = L-methionyl-(R)-S-oxide-[protein] + [thioredoxin]-dithiol. In Salmonella arizonae (strain ATCC BAA-731 / CDC346-86 / RSK2980), this protein is Peptide methionine sulfoxide reductase MsrB.